The following is a 750-amino-acid chain: GRIP and coiled-coil domain-containing protein C27D7.02c (750 aa).

Disordered regions lie at residues 14-53 (AQGQEEAKNRRRQFQEEDQLRRNNKSSNKLSQNEEDAKNM) and 188-280 (KTVE…RDIA). Composition is skewed to basic and acidic residues over residues 18 to 34 (EEAKNRRRQFQEEDQLR) and 188 to 198 (KTVETKNDVPE). Residues 28 to 182 (QEEDQLRRNN…AQSIEQEVIS (155 aa)) adopt a coiled-coil conformation. Residues 201 to 213 (RPSTDTIGVSSAL) are compositionally biased toward polar residues. A coiled-coil region spans residues 213–243 (LSKKKKKRNRKNQKKKSTKQNIEATTENDAL). A compositionally biased stretch (basic residues) spans 214-230 (SKKKKKRNRKNQKKKST). Over residues 233 to 251 (NIEATTENDALSESISTPD) the composition is skewed to polar residues. Residues 269–280 (ADSKEEERRDIA) show a composition bias toward basic and acidic residues. A coiled-coil region spans residues 344-665 (KLVEELTKQL…YEHLQKSFKN (322 aa)). Residues 672 to 703 (KQQPSNHGRNSSVSRSSSSVEVNSKHPGSDDM) form a disordered region. The segment covering 676-693 (SNHGRNSSVSRSSSSVEV) has biased composition (low complexity). Residues 694 to 703 (NSKHPGSDDM) show a composition bias toward basic and acidic residues. In terms of domain architecture, GRIP spans 700-748 (SDDMLIDKEYTRNILFQFLEQRDRRPEIVNLLSILLDLSEEQKQKLLSV).

Its subcellular location is the cytoplasm. This is GRIP and coiled-coil domain-containing protein C27D7.02c from Schizosaccharomyces pombe (strain 972 / ATCC 24843) (Fission yeast).